We begin with the raw amino-acid sequence, 195 residues long: Large ribosomal subunit protein uL18 (195 aa).

This sequence belongs to the universal ribosomal protein uL18 family. In terms of assembly, part of the 50S ribosomal subunit. Contacts the 5S and 23S rRNAs.

Functionally, this is one of the proteins that bind and probably mediate the attachment of the 5S RNA into the large ribosomal subunit, where it forms part of the central protuberance. The sequence is that of Large ribosomal subunit protein uL18 from Nanoarchaeum equitans (strain Kin4-M).